The sequence spans 505 residues: Cobyric acid synthase (505 aa).

Residues 251 to 444 (DIDVAVIKLP…IHGIFDNSEF (194 aa)) form the GATase cobBQ-type domain. Cysteine 332 acts as the Nucleophile in catalysis. Residue histidine 436 is part of the active site.

The protein belongs to the CobB/CobQ family. CobQ subfamily.

It functions in the pathway cofactor biosynthesis; adenosylcobalamin biosynthesis. Functionally, catalyzes amidations at positions B, D, E, and G on adenosylcobyrinic A,C-diamide. NH(2) groups are provided by glutamine, and one molecule of ATP is hydrogenolyzed for each amidation. The chain is Cobyric acid synthase from Clostridium novyi (strain NT).